Here is a 362-residue protein sequence, read N- to C-terminus: Protein RecA (362 aa).

G65 to T72 provides a ligand contact to ATP. The interval R323–E362 is disordered. The span at L331–E362 shows a compositional bias: basic and acidic residues.

The protein belongs to the RecA family.

It localises to the cytoplasm. Functionally, can catalyze the hydrolysis of ATP in the presence of single-stranded DNA, the ATP-dependent uptake of single-stranded DNA by duplex DNA, and the ATP-dependent hybridization of homologous single-stranded DNAs. It interacts with LexA causing its activation and leading to its autocatalytic cleavage. This is Protein RecA from Limosilactobacillus reuteri (strain DSM 20016) (Lactobacillus reuteri).